Consider the following 354-residue polypeptide: DNA polymerase IV 2 (354 aa).

Residues 4–184 (IIHIDMDAFY…LPVKKFHGVG (181 aa)) enclose the UmuC domain. Mg(2+) contacts are provided by Asp8 and Asp102. The active site involves Glu103.

This sequence belongs to the DNA polymerase type-Y family. As to quaternary structure, monomer. Mg(2+) is required as a cofactor.

It localises to the cytoplasm. It catalyses the reaction DNA(n) + a 2'-deoxyribonucleoside 5'-triphosphate = DNA(n+1) + diphosphate. In terms of biological role, poorly processive, error-prone DNA polymerase involved in untargeted mutagenesis. Copies undamaged DNA at stalled replication forks, which arise in vivo from mismatched or misaligned primer ends. These misaligned primers can be extended by PolIV. Exhibits no 3'-5' exonuclease (proofreading) activity. May be involved in translesional synthesis, in conjunction with the beta clamp from PolIII. The polypeptide is DNA polymerase IV 2 (dinB2) (Rhizobium meliloti (strain 1021) (Ensifer meliloti)).